The chain runs to 238 residues: Pyridoxine 5'-phosphate synthase (238 aa).

3-amino-2-oxopropyl phosphate-binding residues include N7 and R18. H43 (proton acceptor) is an active-site residue. 2 residues coordinate 1-deoxy-D-xylulose 5-phosphate: R45 and H50. Residue E70 is the Proton acceptor of the active site. T100 serves as a coordination point for 1-deoxy-D-xylulose 5-phosphate. The active-site Proton donor is the H190. Residues D191 and 213–214 (GH) contribute to the 3-amino-2-oxopropyl phosphate site.

This sequence belongs to the PNP synthase family. In terms of assembly, homooctamer; tetramer of dimers.

It is found in the cytoplasm. The catalysed reaction is 3-amino-2-oxopropyl phosphate + 1-deoxy-D-xylulose 5-phosphate = pyridoxine 5'-phosphate + phosphate + 2 H2O + H(+). Its pathway is cofactor biosynthesis; pyridoxine 5'-phosphate biosynthesis; pyridoxine 5'-phosphate from D-erythrose 4-phosphate: step 5/5. Catalyzes the complicated ring closure reaction between the two acyclic compounds 1-deoxy-D-xylulose-5-phosphate (DXP) and 3-amino-2-oxopropyl phosphate (1-amino-acetone-3-phosphate or AAP) to form pyridoxine 5'-phosphate (PNP) and inorganic phosphate. The protein is Pyridoxine 5'-phosphate synthase of Phocaeicola vulgatus (strain ATCC 8482 / DSM 1447 / JCM 5826 / CCUG 4940 / NBRC 14291 / NCTC 11154) (Bacteroides vulgatus).